The following is a 173-amino-acid chain: NADH-ubiquinone oxidoreductase chain 6 (173 aa).

A run of 5 helical transmembrane segments spans residues 1–21 (MTYFVLFLGLCFVLGSLAVAS), 27–47 (YGVVGLVLASIAGCGWLLSLG), 48–68 (VSFVSLVLFMVYLGGMLVVFV), 87–107 (VVGYGVGFVAVLMVGLIVGGF), and 139–159 (CGVGMFLVAGWGLLLTLFVVL).

This sequence belongs to the complex I subunit 6 family.

It localises to the mitochondrion membrane. The catalysed reaction is a ubiquinone + NADH + 5 H(+)(in) = a ubiquinol + NAD(+) + 4 H(+)(out). Its function is as follows. Core subunit of the mitochondrial membrane respiratory chain NADH dehydrogenase (Complex I) that is believed to belong to the minimal assembly required for catalysis. Complex I functions in the transfer of electrons from NADH to the respiratory chain. The immediate electron acceptor for the enzyme is believed to be ubiquinone. This is NADH-ubiquinone oxidoreductase chain 6 (MT-ND6) from Aethia cristatella (Crested auklet).